Here is a 505-residue protein sequence, read N- to C-terminus: Adenylosuccinate synthetase, chloroplastic (505 aa).

The N-terminal 60 residues, Met1–Leu60, are a transit peptide targeting the chloroplast. Residues Gly92–Lys98 and Gly120–Thr122 contribute to the GTP site. Catalysis depends on Asp93, which acts as the Proton acceptor. Positions 93 and 120 each coordinate Mg(2+). Residues Asp93–Lys96, Asn118–His121, Thr210, Arg224, Gln304, Thr319, and Arg383 each bind IMP. Catalysis depends on His121, which acts as the Proton donor. Position 379-385 (Thr379–Arg385) interacts with substrate. GTP contacts are provided by residues Arg385, Lys411–Asp413, and Gly494–Gly496.

It belongs to the adenylosuccinate synthetase family. In terms of assembly, homodimer. Requires Mg(2+) as cofactor.

Its subcellular location is the plastid. The protein resides in the chloroplast. It catalyses the reaction IMP + L-aspartate + GTP = N(6)-(1,2-dicarboxyethyl)-AMP + GDP + phosphate + 2 H(+). It participates in purine metabolism; AMP biosynthesis via de novo pathway; AMP from IMP: step 1/2. In terms of biological role, plays an important role in the de novo pathway and in the salvage pathway of purine nucleotide biosynthesis. Catalyzes the first committed step in the biosynthesis of AMP from IMP. In Nicotiana tabacum (Common tobacco), this protein is Adenylosuccinate synthetase, chloroplastic.